The sequence spans 434 residues: Tol-Pal system protein TolB (434 aa).

The signal sequence occupies residues 1 to 28; that stretch reads MMNTRVWCKIIGMLALLVWLVSSPSVFA.

This sequence belongs to the TolB family. The Tol-Pal system is composed of five core proteins: the inner membrane proteins TolA, TolQ and TolR, the periplasmic protein TolB and the outer membrane protein Pal. They form a network linking the inner and outer membranes and the peptidoglycan layer.

It localises to the periplasm. In terms of biological role, part of the Tol-Pal system, which plays a role in outer membrane invagination during cell division and is important for maintaining outer membrane integrity. This chain is Tol-Pal system protein TolB, found in Nitrosococcus oceani (strain ATCC 19707 / BCRC 17464 / JCM 30415 / NCIMB 11848 / C-107).